Reading from the N-terminus, the 906-residue chain is Cadherin-2 (906 aa).

An N-terminal signal peptide occupies residues M1–A25. Residues S26–R159 constitute a propeptide that is removed on maturation. Phosphoserine is present on residues S96 and S135. Cadherin domains follow at residues D160 to F267, L268 to P392, E393 to F497, A498 to P603, and Q604 to R714. Over D160–A724 the chain is Extracellular. E170 serves as a coordination point for Ca(2+). A glycan (N-linked (GlcNAc...) asparagine) is linked at N190. D226, E228, D259, M260, N261, D262, and N263 together coordinate Ca(2+). N-linked (GlcNAc...) asparagine glycosylation is present at N273. Positions 293, 295, and 301 each coordinate Ca(2+). An N-linked (GlcNAc...) asparagine glycan is attached at N325. Residue D353 coordinates Ca(2+). N357, N402, N572, N622, N651, and N692 each carry an N-linked (GlcNAc...) asparagine glycan. A helical membrane pass occupies residues I725–M746. Residues K747–D906 are Cytoplasmic-facing. Low complexity predominate over residues S863–G880. Residues S863–Y884 form a disordered region.

In terms of assembly, homodimer (via extracellular region). Can also form heterodimers with other cadherins (via extracellular region). Dimerization occurs in trans, i.e. with a cadherin chain from another cell. Interacts with CDCP1. Interacts with PCDH8; this complex may also include TAOK2. The interaction with PCDH8 may lead to internalization through TAOK2/p38 MAPK pathway. Identified in a complex containing FGFR4, NCAM1, CDH2, PLCG1, FRS2, SRC, SHC1, GAP43 and CTTN. May interact with OBSCN (via protein kinase domain 2). Interacts with FBXO45. Cleaved by MMP24. Ectodomain cleavage leads to the generation of a soluble 90 kDa N-terminal soluble fragment and a 45 kDa membrane-bound C-terminal fragment 1 (CTF1), which is further cleaved by gamma-secretase into a 35 kDa. Cleavage in neural stem cells by MMP24 affects CDH2-mediated anchorage of neural stem cells to ependymocytes in the adult subependymal zone, leading to modulate neural stem cell quiescence. In terms of processing, may be phosphorylated by OBSCN. Detected in liver, kidney, heart and brain capillaries.

It is found in the cell membrane. It localises to the sarcolemma. The protein resides in the cell junction. The protein localises to the cell surface. Its subcellular location is the desmosome. It is found in the adherens junction. Calcium-dependent cell adhesion protein; preferentially mediates homotypic cell-cell adhesion by dimerization with a CDH2 chain from another cell. Cadherins may thus contribute to the sorting of heterogeneous cell types. Acts as a regulator of neural stem cells quiescence by mediating anchorage of neural stem cells to ependymocytes in the adult subependymal zone: upon cleavage by MMP24, CDH2-mediated anchorage is affected, leading to modulate neural stem cell quiescence. Plays a role in cell-to-cell junction formation between pancreatic beta cells and neural crest stem (NCS) cells, promoting the formation of processes by NCS cells. Required for proper neurite branching. Required for pre- and postsynaptic organization. CDH2 may be involved in neuronal recognition mechanism. In hippocampal neurons, may regulate dendritic spine density. The protein is Cadherin-2 (CDH2) of Bos taurus (Bovine).